A 1218-amino-acid chain; its full sequence is Thrombospondin type 1 domain-containing protein (1218 aa).

Disordered regions lie at residues 82–101 (SAGFPRSASSSASSAPPCSS), 189–240 (SLEE…SRTR), 298–383 (HTAN…VNGL), and 445–471 (GGKSRRSEWRRKRTGMMASEARESHRG). A compositionally biased stretch (basic and acidic residues) spans 201 to 210 (GYEEERERRS). Over residues 315 to 375 (SSRFTSKASS…SSPLSSSPDS (61 aa)) the composition is skewed to low complexity. In terms of domain architecture, TSP type-1 spans 638–704 (SCITGPWSEW…RRKCNLGACP (67 aa)). A helical transmembrane segment spans residues 886–906 (GVSHLWISLCAGAVAAVVFLV). Residues 1129 to 1153 (RRRARRGRREGDSGEGGDCGEARKA) are disordered.

In terms of assembly, component of a complex, at least composed of cysteine repeat modular protein A (CRMPa), cysteine repeat modular protein B (CRMPb), micronemal protein 15 (MIC15) and thrombospondin type 1 domain-containing protein (TSP1).

The protein resides in the membrane. Its function is as follows. Required for rhoptry secretion. Plays a role in host cell invasion. The chain is Thrombospondin type 1 domain-containing protein from Toxoplasma gondii.